Reading from the N-terminus, the 169-residue chain is N5-carboxyaminoimidazole ribonucleotide mutase (169 aa).

3 residues coordinate substrate: serine 16, aspartate 19, and arginine 46.

It belongs to the AIR carboxylase family. Class I subfamily.

It catalyses the reaction 5-carboxyamino-1-(5-phospho-D-ribosyl)imidazole + H(+) = 5-amino-1-(5-phospho-D-ribosyl)imidazole-4-carboxylate. Its pathway is purine metabolism; IMP biosynthesis via de novo pathway; 5-amino-1-(5-phospho-D-ribosyl)imidazole-4-carboxylate from 5-amino-1-(5-phospho-D-ribosyl)imidazole (N5-CAIR route): step 2/2. In terms of biological role, catalyzes the conversion of N5-carboxyaminoimidazole ribonucleotide (N5-CAIR) to 4-carboxy-5-aminoimidazole ribonucleotide (CAIR). The chain is N5-carboxyaminoimidazole ribonucleotide mutase from Escherichia coli O157:H7.